A 239-amino-acid chain; its full sequence is 4-hydroxy-tetrahydrodipicolinate reductase (239 aa).

Residues 12–17 (GASGRM), 94–96 (GTT), and 118–121 (ASNF) each bind NAD(+). The active-site Proton donor/acceptor is the His150. His151 is a binding site for (S)-2,3,4,5-tetrahydrodipicolinate. Catalysis depends on Lys154, which acts as the Proton donor. Position 160–161 (160–161 (GT)) interacts with (S)-2,3,4,5-tetrahydrodipicolinate.

It belongs to the DapB family.

It localises to the cytoplasm. The enzyme catalyses (S)-2,3,4,5-tetrahydrodipicolinate + NAD(+) + H2O = (2S,4S)-4-hydroxy-2,3,4,5-tetrahydrodipicolinate + NADH + H(+). It catalyses the reaction (S)-2,3,4,5-tetrahydrodipicolinate + NADP(+) + H2O = (2S,4S)-4-hydroxy-2,3,4,5-tetrahydrodipicolinate + NADPH + H(+). The protein operates within amino-acid biosynthesis; L-lysine biosynthesis via DAP pathway; (S)-tetrahydrodipicolinate from L-aspartate: step 4/4. Functionally, catalyzes the conversion of 4-hydroxy-tetrahydrodipicolinate (HTPA) to tetrahydrodipicolinate. The polypeptide is 4-hydroxy-tetrahydrodipicolinate reductase (Stenotrophomonas maltophilia (strain K279a)).